A 341-amino-acid chain; its full sequence is Holliday junction branch migration complex subunit RuvB (341 aa).

Residues 1–182 (MKDRLISAVA…FGVISRLEYY (182 aa)) form a large ATPase domain (RuvB-L) region. Residues Leu21, Arg22, Gly63, Lys66, Thr67, Thr68, 129-131 (EDY), Arg172, Tyr182, and Arg219 contribute to the ATP site. Thr67 lines the Mg(2+) pocket. The interval 183-253 (RPEDLVLIVN…VAVEALKFLE (71 aa)) is small ATPAse domain (RuvB-S). The head domain (RuvB-H) stretch occupies residues 256–341 (PLGLDFADRR…REETDQVSLW (86 aa)). Arg311 and Arg316 together coordinate DNA.

It belongs to the RuvB family. Homohexamer. Forms an RuvA(8)-RuvB(12)-Holliday junction (HJ) complex. HJ DNA is sandwiched between 2 RuvA tetramers; dsDNA enters through RuvA and exits via RuvB. An RuvB hexamer assembles on each DNA strand where it exits the tetramer. Each RuvB hexamer is contacted by two RuvA subunits (via domain III) on 2 adjacent RuvB subunits; this complex drives branch migration. In the full resolvosome a probable DNA-RuvA(4)-RuvB(12)-RuvC(2) complex forms which resolves the HJ.

It localises to the cytoplasm. The catalysed reaction is ATP + H2O = ADP + phosphate + H(+). In terms of biological role, the RuvA-RuvB-RuvC complex processes Holliday junction (HJ) DNA during genetic recombination and DNA repair, while the RuvA-RuvB complex plays an important role in the rescue of blocked DNA replication forks via replication fork reversal (RFR). RuvA specifically binds to HJ cruciform DNA, conferring on it an open structure. The RuvB hexamer acts as an ATP-dependent pump, pulling dsDNA into and through the RuvAB complex. RuvB forms 2 homohexamers on either side of HJ DNA bound by 1 or 2 RuvA tetramers; 4 subunits per hexamer contact DNA at a time. Coordinated motions by a converter formed by DNA-disengaged RuvB subunits stimulates ATP hydrolysis and nucleotide exchange. Immobilization of the converter enables RuvB to convert the ATP-contained energy into a lever motion, pulling 2 nucleotides of DNA out of the RuvA tetramer per ATP hydrolyzed, thus driving DNA branch migration. The RuvB motors rotate together with the DNA substrate, which together with the progressing nucleotide cycle form the mechanistic basis for DNA recombination by continuous HJ branch migration. Branch migration allows RuvC to scan DNA until it finds its consensus sequence, where it cleaves and resolves cruciform DNA. The sequence is that of Holliday junction branch migration complex subunit RuvB from Pelotomaculum thermopropionicum (strain DSM 13744 / JCM 10971 / SI).